The chain runs to 610 residues: UvrABC system protein C (610 aa).

Residues 16 to 94 (SQPGVYRMYD…IKLYQPRYNV (79 aa)) enclose the GIY-YIG domain. The UVR domain occupies 204–239 (DQVLNQLVARMEQASGDLRFEEAGRLRDQIQAVRRV).

It belongs to the UvrC family. As to quaternary structure, interacts with UvrB in an incision complex.

The protein resides in the cytoplasm. Functionally, the UvrABC repair system catalyzes the recognition and processing of DNA lesions. UvrC both incises the 5' and 3' sides of the lesion. The N-terminal half is responsible for the 3' incision and the C-terminal half is responsible for the 5' incision. The polypeptide is UvrABC system protein C (Erwinia tasmaniensis (strain DSM 17950 / CFBP 7177 / CIP 109463 / NCPPB 4357 / Et1/99)).